An 86-amino-acid chain; its full sequence is MSDQEKISHTVIGRVVSDKMDKTITVLIERKVAHSLYKKYVRRFTKLHAHDENNECRMGDIVAIAGTRPLSKTKAWKLVDILERAR.

This sequence belongs to the universal ribosomal protein uS17 family. Part of the 30S ribosomal subunit.

In terms of biological role, one of the primary rRNA binding proteins, it binds specifically to the 5'-end of 16S ribosomal RNA. The polypeptide is Small ribosomal subunit protein uS17 (Nitrosococcus oceani (strain ATCC 19707 / BCRC 17464 / JCM 30415 / NCIMB 11848 / C-107)).